The following is a 268-amino-acid chain: Putative cysteine-rich repeat secretory protein 5 (268 aa).

Residues 1 to 24 (MTGINTHFAVALFCFFSFSLRAMS) form the signal peptide. Gnk2-homologous domains lie at 27–129 (SQML…NVSF) and 135–248 (DVPS…ISAL).

Belongs to the cysteine-rich repeat secretory protein family.

It localises to the secreted. The polypeptide is Putative cysteine-rich repeat secretory protein 5 (CRRSP5) (Arabidopsis thaliana (Mouse-ear cress)).